The chain runs to 274 residues: Large ribosomal subunit protein uL2cz/uL2cy (274 aa).

The segment at 225–274 is disordered; that stretch reads PVDHPHGGGEGRAPIGRKKPVTPWGYPALGRRTRKRKKYSETLILRRRSK.

This sequence belongs to the universal ribosomal protein uL2 family. Part of the 50S ribosomal subunit.

It localises to the plastid. It is found in the chloroplast. The protein is Large ribosomal subunit protein uL2cz/uL2cy (rpl2-A) of Crucihimalaya wallichii (Rock-cress).